A 211-amino-acid chain; its full sequence is Protein-L-isoaspartate O-methyltransferase (211 aa).

The active site involves Ser60.

The protein belongs to the methyltransferase superfamily. L-isoaspartyl/D-aspartyl protein methyltransferase family.

The protein localises to the cytoplasm. The catalysed reaction is [protein]-L-isoaspartate + S-adenosyl-L-methionine = [protein]-L-isoaspartate alpha-methyl ester + S-adenosyl-L-homocysteine. In terms of biological role, catalyzes the methyl esterification of L-isoaspartyl residues in peptides and proteins that result from spontaneous decomposition of normal L-aspartyl and L-asparaginyl residues. It plays a role in the repair and/or degradation of damaged proteins. In Ectopseudomonas mendocina (strain ymp) (Pseudomonas mendocina), this protein is Protein-L-isoaspartate O-methyltransferase.